The chain runs to 241 residues: 3-deoxy-manno-octulosonate cytidylyltransferase (241 aa).

This sequence belongs to the KdsB family.

The protein localises to the cytoplasm. It carries out the reaction 3-deoxy-alpha-D-manno-oct-2-ulosonate + CTP = CMP-3-deoxy-beta-D-manno-octulosonate + diphosphate. It functions in the pathway nucleotide-sugar biosynthesis; CMP-3-deoxy-D-manno-octulosonate biosynthesis; CMP-3-deoxy-D-manno-octulosonate from 3-deoxy-D-manno-octulosonate and CTP: step 1/1. The protein operates within bacterial outer membrane biogenesis; lipopolysaccharide biosynthesis. Its function is as follows. Activates KDO (a required 8-carbon sugar) for incorporation into bacterial lipopolysaccharide in Gram-negative bacteria. The sequence is that of 3-deoxy-manno-octulosonate cytidylyltransferase from Rickettsia rickettsii (strain Sheila Smith).